The chain runs to 455 residues: Asparagine--tRNA ligase (455 aa).

Belongs to the class-II aminoacyl-tRNA synthetase family. Homodimer.

Its subcellular location is the cytoplasm. It catalyses the reaction tRNA(Asn) + L-asparagine + ATP = L-asparaginyl-tRNA(Asn) + AMP + diphosphate + H(+). The polypeptide is Asparagine--tRNA ligase (Lawsonia intracellularis (strain PHE/MN1-00)).